The chain runs to 196 residues: Adenylate kinase (196 aa).

9–17 lines the ATP pocket; sequence GIPGVGKST.

It belongs to the archaeal adenylate kinase family.

It localises to the cytoplasm. It catalyses the reaction AMP + ATP = 2 ADP. This is Adenylate kinase from Thermococcus sibiricus (strain DSM 12597 / MM 739).